The primary structure comprises 468 residues: Sorting and assembly machinery component 50 homolog (468 aa).

The disordered stretch occupies residues 1-24; the sequence is MGTVHARSLDPLPMNGPDFGSHDD. In terms of domain architecture, POTRA spans 44–124; sequence VVVQRVHFEG…LDVTFEVTEL (81 aa).

The protein belongs to the SAM50/omp85 family. As to quaternary structure, associates with the mitochondrial contact site and cristae organizing system (MICOS) complex (also known as MINOS or MitOS complex).

The protein resides in the mitochondrion outer membrane. May play a role in the maintenance of the structure of mitochondrial cristae. This chain is Sorting and assembly machinery component 50 homolog (samm50), found in Xenopus tropicalis (Western clawed frog).